We begin with the raw amino-acid sequence, 375 residues long: Queuine tRNA-ribosyltransferase (375 aa).

Asp90 acts as the Proton acceptor in catalysis. Substrate is bound by residues 90-94, Asp144, Gln193, and Gly220; that span reads DSGGF. The tract at residues 251-257 is RNA binding; that stretch reads GVGTPED. Catalysis depends on Asp270, which acts as the Nucleophile. An RNA binding; important for wobble base 34 recognition region spans residues 275 to 279; the sequence is TRNAR. The Zn(2+) site is built by Cys308, Cys310, Cys313, and His339.

It belongs to the queuine tRNA-ribosyltransferase family. Homodimer. Within each dimer, one monomer is responsible for RNA recognition and catalysis, while the other monomer binds to the replacement base PreQ1. Zn(2+) serves as cofactor.

It catalyses the reaction 7-aminomethyl-7-carbaguanine + guanosine(34) in tRNA = 7-aminomethyl-7-carbaguanosine(34) in tRNA + guanine. It functions in the pathway tRNA modification; tRNA-queuosine biosynthesis. Catalyzes the base-exchange of a guanine (G) residue with the queuine precursor 7-aminomethyl-7-deazaguanine (PreQ1) at position 34 (anticodon wobble position) in tRNAs with GU(N) anticodons (tRNA-Asp, -Asn, -His and -Tyr). Catalysis occurs through a double-displacement mechanism. The nucleophile active site attacks the C1' of nucleotide 34 to detach the guanine base from the RNA, forming a covalent enzyme-RNA intermediate. The proton acceptor active site deprotonates the incoming PreQ1, allowing a nucleophilic attack on the C1' of the ribose to form the product. After dissociation, two additional enzymatic reactions on the tRNA convert PreQ1 to queuine (Q), resulting in the hypermodified nucleoside queuosine (7-(((4,5-cis-dihydroxy-2-cyclopenten-1-yl)amino)methyl)-7-deazaguanosine). The chain is Queuine tRNA-ribosyltransferase from Methylibium petroleiphilum (strain ATCC BAA-1232 / LMG 22953 / PM1).